The following is a 62-amino-acid chain: Short neurotoxin 2 (62 aa).

The disordered stretch occupies residues 1–20 (MTCYNQQSSEAKTTTTCSGG). Intrachain disulfides connect Cys-3–Cys-24, Cys-17–Cys-41, Cys-43–Cys-54, and Cys-55–Cys-60.

It belongs to the three-finger toxin family. Short-chain subfamily. Type I alpha-neurotoxin sub-subfamily. Expressed by the venom gland.

It localises to the secreted. In terms of biological role, binds to muscle nicotinic acetylcholine receptor (nAChR) and inhibit acetylcholine from binding to the receptor, thereby impairing neuromuscular transmission. This is Short neurotoxin 2 from Oxyuranus scutellatus scutellatus (Australian taipan).